The sequence spans 1013 residues: MPRSSATARKSHSNRQENGAAGSGKKVNKQKSNGQLNGNANGSSAPISGPSSQVDWPSSRSNSDTAINSTVATATKANGTTECSKADGNGRGYLNGYVKGNPDMSYGQANGAVPQNGGLTGQASRRTESSKRSGSNTSINPLQLASTILKSCPMYDTIAILIFLLQLPPMVLTLVQFLFASLTFMPPGGASAGSLTSNFDIFQGPAGTPSLGTMIAMDGFFLLFWGLFMWTWAQNFALDLAHVQVAITLGGGGSGKNGGVNTLCVGIVLVLHLIRSKGIQDFVLGHLLSAKVISPDLLSQYSHLLPSEFRRTEPQSSPSWIRSLLAVHILAQAGTAMARRSMAKNRAPAPPRTGKRVDTEASAGSQTQIDSAFESGTSVSSYIGADGQLITPATHKDGRDRLISAKKRRRQANQVRNRQPFWAALASTKVTVMREYEHSRALSKTARGLTMTEEDLQGVSLDDGLVWITDVDSSSIKFAAGDLVSEDAGVSGSCESGRLGEDMEPFYVCVNGALWATVTICKVQDVAKGSSVVHWRGEISGLAPNCAYTCSFLRSDTEEEICVMSVKTPIANDAEQVVSSVSTPPQPSYRPSSPTTTLKNSIVNAELKLNEKRTRLRKAKNDHKLVVSKIRKELDNYNHRLHSGTDENRQKQRSLQLERNIKQTEEATAVLEVQLDNLENIPEEELEEWSAEKAKYEHELELFNSAKEDVATARSAAAREVSQLESDLTSTIQRRERLQGRRTRVNEQYERIISANAQGLNERERRAAEQFAREQDQAKVEANFNEQFASISQSVQEYQLRTNQLWQQCVAIEQALQQQQQQQILLDSAPLTPEGNLPGTNTLSEAPTLSLGALTTSASSNRSLLGLSFPPLKSSPLQHASSPIGPTSSRPTSPTQAPSYLQHFPASPLINTASPFESDFIHRDRSFSNRSGHSSLYGSDFFDSGRRPPFQFDLSEKVVDKRRSSGSESNAPNLGLRPICSPFPRAGSRASGSGSGGSGSGSGSPSSATGKGN.

Disordered regions lie at residues 1 to 65 (MPRS…NSDT) and 105 to 137 (SYGQANGAVPQNGGLTGQASRRTESSKRSGSNT). Residues 30–65 (QKSNGQLNGNANGSSAPISGPSSQVDWPSSRSNSDT) are compositionally biased toward polar residues. The next 3 membrane-spanning stretches (helical) occupy residues 158-178 (IAILIFLLQLPPMVLTLVQFL), 211-231 (LGTMIAMDGFFLLFWGLFMWT), and 254-274 (SGKNGGVNTLCVGIVLVLHLI). Residues 339 to 367 (RRSMAKNRAPAPPRTGKRVDTEASAGSQT) form a disordered region. Positions 596–782 (TTLKNSIVNA…REQDQAKVEA (187 aa)) form a coiled coil. Over residues 875-899 (SPLQHASSPIGPTSSRPTSPTQAPS) the composition is skewed to polar residues. Disordered regions lie at residues 875–902 (SPLQHASSPIGPTSSRPTSPTQAPSYLQ) and 953–1013 (DLSE…GKGN). Positions 954–965 (LSEKVVDKRRSS) are enriched in basic and acidic residues. A compositionally biased stretch (gly residues) spans 993–1002 (SGSGGSGSGS). Residues 1003-1013 (GSPSSATGKGN) are compositionally biased toward low complexity.

It belongs to the acrB family.

It localises to the membrane. Component of the regulatory network controlling carbon source utilization through ubiquitination and deubiquitination involving creA, creB, creC, creD and acrB. Involved in resistance to acriflavine, and required for normal growth on a range of sole carbon sources, including fructose, cellobiose, raffinose, and starch, and reduced utilization of amino acids, including GABA and beta-alanine, as sole carbon and nitrogen sources. This Aspergillus oryzae (strain ATCC 42149 / RIB 40) (Yellow koji mold) protein is Probable ubiquitination network signaling protein acrB (acrB).